Consider the following 1086-residue polypeptide: Tyrosine-protein kinase receptor svh-2 (1086 aa).

The N-terminal stretch at 1 to 34 is a signal peptide; that stretch reads MVLGSSQSSAKELTTQSSIFRFLVLLLCFTSATG. Over 35–651 the chain is Extracellular; it reads GQINGKLLNG…DKKGSSPGWK (617 aa). N-linked (GlcNAc...) asparagine glycosylation is found at Asn276, Asn299, Asn461, Asn554, and Asn617. Residues 652 to 672 traverse the membrane as a helical segment; it reads IAIAIISVMTIILIVAIIVYY. Topologically, residues 673-1086 are cytoplasmic; it reads MRNRFPRIKT…LLSECSETSV (414 aa). The Protein kinase domain occupies 735-996; it reads VDKLDPIGQG…SDLVTIIPNV (262 aa). ATP is bound by residues 741-749 and Lys767; that span reads IGQGHYGVV. Asp858 (proton acceptor) is an active-site residue. Tyr890 carries the phosphotyrosine modification. Positions 1056–1086 are disordered; the sequence is AELPSDSPSTSTAIPQSTPYQLLSECSETSV. Residues 1061–1086 show a composition bias toward polar residues; it reads DSPSTSTAIPQSTPYQLLSECSETSV.

Belongs to the protein kinase superfamily. Tyr protein kinase family. As to quaternary structure, interacts (via cytoplasmic domain) with mlk-1. Interacts with shc-1 (via SH2 domain). May interact (when tyrosine-phosphorylated) with tns-1 (via SH2 domain). In terms of processing, may be autophosphorylated on Tyr-890 following dimerization. In terms of tissue distribution, expressed in body wall and vulva muscles, pharynx, intestine, excretory canals, distal tip cells and some neurons. Expressed in D-type motor neurons upon axon injury.

It is found in the cell membrane. It catalyses the reaction L-tyrosyl-[protein] + ATP = O-phospho-L-tyrosyl-[protein] + ADP + H(+). Functionally, receptor tyrosine kinase which may phosphorylate mlk-1, a component of the mlk-1, mek-1 and kgb-1 pathway. Involved in axon regeneration after injury by promoting the generation of productive and stable growth cones. This is Tyrosine-protein kinase receptor svh-2 from Caenorhabditis elegans.